We begin with the raw amino-acid sequence, 387 residues long: Oleoyl-12-hydroxylase FAH12 (387 aa).

Residues 1–34 (MGGGGRMSTVITSNNSEKKGGSSHLKRAPHTKPP) are disordered. Transmembrane regions (helical) follow at residues 61 to 81 (AYDV…FPYI) and 88 to 108 (VAWL…WVIG). The Histidine box-1 signature appears at 109 to 113 (HECGH). A helical transmembrane segment spans residues 121-141 (LADDIVGLIVHSALLVPYFSW). The Histidine box-2 motif lies at 145-149 (HRRHH). Transmembrane regions (helical) follow at residues 183 to 203 (VLTL…FNVS), 229 to 249 (IYIA…ATMA), and 253 to 273 (AWVM…LVMI). The Histidine box-3 motif lies at 319-323 (HVAHH).

The protein belongs to the fatty acid desaturase type 1 family. Expressed in seeds. Barely detected in leaves.

It is found in the microsome membrane. The catalysed reaction is a 1-acyl-2-(9Z)-octadecenoyl-sn-glycero-3-phosphocholine + 2 Fe(II)-[cytochrome b5] + O2 + 2 H(+) = a 1-acyl-2-[(R)-12-hydroxyoleoyl]-sn-glycero-3-phosphocholine + 2 Fe(III)-[cytochrome b5] + H2O. Its pathway is lipid metabolism; monounsaturated fatty acid biosynthesis. With respect to regulation, inhibited by oleoyloxyethyl phosphocholine. Oleoyl-12-hydroxylase involved in the biosynthesis of ricinoleate (12-hydroxy-cis-9-octadecenoate), the major fatty acid constituent of the oil seeds from castor bean plants. Catalyzes the hydroxylation at the 12-position of 1-acyl-2-oleoyl-sn-glycero-3-phosphocholine (2-oleoyl-PC), which seems to be the actual physiological subtrate. It uses cytochrome b5 as an electron donor. May also be involved in the production of lesquerolic acid (14-hydroxyeicos-cis-ll-enoic acid) in vitro. In Ricinus communis (Castor bean), this protein is Oleoyl-12-hydroxylase FAH12.